We begin with the raw amino-acid sequence, 98 residues long: NADH-ubiquinone oxidoreductase chain 4L (98 aa).

3 helical membrane-spanning segments follow: residues 1-21 (MTLI…GLLM), 29-49 (ALLC…LTIL), and 61-81 (IILL…LVMV).

It belongs to the complex I subunit 4L family. Core subunit of respiratory chain NADH dehydrogenase (Complex I) which is composed of 45 different subunits.

The protein localises to the mitochondrion inner membrane. The catalysed reaction is a ubiquinone + NADH + 5 H(+)(in) = a ubiquinol + NAD(+) + 4 H(+)(out). Functionally, core subunit of the mitochondrial membrane respiratory chain NADH dehydrogenase (Complex I) which catalyzes electron transfer from NADH through the respiratory chain, using ubiquinone as an electron acceptor. Part of the enzyme membrane arm which is embedded in the lipid bilayer and involved in proton translocation. In Eschrichtius robustus (California gray whale), this protein is NADH-ubiquinone oxidoreductase chain 4L (MT-ND4L).